The primary structure comprises 258 residues: 5'-nucleotidase SurE (258 aa).

4 residues coordinate a divalent metal cation: Asp8, Asp9, Ser40, and Asn98.

The protein belongs to the SurE nucleotidase family. A divalent metal cation serves as cofactor.

It localises to the cytoplasm. The enzyme catalyses a ribonucleoside 5'-phosphate + H2O = a ribonucleoside + phosphate. Its function is as follows. Nucleotidase that shows phosphatase activity on nucleoside 5'-monophosphates. The chain is 5'-nucleotidase SurE from Synechococcus elongatus (strain ATCC 33912 / PCC 7942 / FACHB-805) (Anacystis nidulans R2).